A 377-amino-acid polypeptide reads, in one-letter code: Endolytic peptidoglycan transglycosylase RlpA (377 aa).

Positions 1 to 19 (MHKQLPVICVAAGIVLLAA) are cleaved as a signal peptide. C20 carries N-palmitoyl cysteine lipidation. C20 carries the S-diacylglycerol cysteine lipid modification. The segment at 196–277 (LPPRPDLSGG…PVSAPVTAPA (82 aa)) is disordered. Composition is skewed to low complexity over residues 208 to 218 (SASSAPAQPQG) and 264 to 277 (PQTA…TAPA). In terms of domain architecture, SPOR spans 300–376 (AAASGRFVVQ…AQLQSFIASA (77 aa)).

It belongs to the RlpA family.

The protein resides in the cell membrane. Its function is as follows. Lytic transglycosylase with a strong preference for naked glycan strands that lack stem peptides. This is Endolytic peptidoglycan transglycosylase RlpA from Salmonella typhi.